Reading from the N-terminus, the 61-residue chain is Statherin (61 aa).

The N-terminal stretch at 1 to 19 (MXFLXFXLXLLXMXXMXXX) is a signal peptide. Residues 20–25 (DSSEEK) form a hydroxyapatite-binding; inhibits crystal growth region. A phosphoserine mark is found at S21 and S22. Positions 37–61 (RYGPYQPFAPQPLYPQPYQPYQPQY) are disordered. Positions 37–61 (RYGPYQPFAPQPLYPQPYQPYQPQY) are hydrophobic; inhibits precipitation of calcium phosphate salts. Pro residues predominate over residues 43–61 (PFAPQPLYPQPYQPYQPQY).

The protein belongs to the histatin/statherin family. As to expression, secreted by parotid and submandibular glands.

The protein resides in the secreted. Functionally, salivary protein that stabilizes saliva supersaturated with calcium salts by inhibiting the precipitation of calcium phosphate salts. It also modulates hydroxyapatite crystal formation on the tooth surface. This is Statherin (STATH) from Macaca fascicularis (Crab-eating macaque).